Consider the following 379-residue polypeptide: UDP-4-amino-4-deoxy-L-arabinose--oxoglutarate aminotransferase (379 aa).

Residue lysine 182 is modified to N6-(pyridoxal phosphate)lysine.

Belongs to the DegT/DnrJ/EryC1 family. ArnB subfamily. As to quaternary structure, homodimer. The cofactor is pyridoxal 5'-phosphate.

It catalyses the reaction UDP-4-amino-4-deoxy-beta-L-arabinose + 2-oxoglutarate = UDP-beta-L-threo-pentopyranos-4-ulose + L-glutamate. Its pathway is nucleotide-sugar biosynthesis; UDP-4-deoxy-4-formamido-beta-L-arabinose biosynthesis; UDP-4-deoxy-4-formamido-beta-L-arabinose from UDP-alpha-D-glucuronate: step 2/3. It participates in bacterial outer membrane biogenesis; lipopolysaccharide biosynthesis. In terms of biological role, catalyzes the conversion of UDP-4-keto-arabinose (UDP-Ara4O) to UDP-4-amino-4-deoxy-L-arabinose (UDP-L-Ara4N). The modified arabinose is attached to lipid A and is required for resistance to polymyxin and cationic antimicrobial peptides. The polypeptide is UDP-4-amino-4-deoxy-L-arabinose--oxoglutarate aminotransferase (Sodalis glossinidius (strain morsitans)).